The primary structure comprises 239 residues: Ribonuclease 3 (239 aa).

The 124-residue stretch at 18 to 141 folds into the RNase III domain; the sequence is YLTLEKALGY…LMAGVYLEAG (124 aa). A Mg(2+)-binding site is contributed by Glu54. Asp58 is a catalytic residue. Mg(2+)-binding residues include Ser127 and Glu130. Glu130 is an active-site residue. The 70-residue stretch at 168 to 237 folds into the DRBM domain; the sequence is DYKTALQELT…AYQALQKLKE (70 aa).

The protein belongs to the ribonuclease III family. As to quaternary structure, homodimer. It depends on Mg(2+) as a cofactor.

The protein localises to the cytoplasm. It carries out the reaction Endonucleolytic cleavage to 5'-phosphomonoester.. Functionally, digests double-stranded RNA. Involved in the processing of primary rRNA transcript to yield the immediate precursors to the large and small rRNAs (23S and 16S). Processes some mRNAs, and tRNAs when they are encoded in the rRNA operon. Processes pre-crRNA and tracrRNA of type II CRISPR loci if present in the organism. This is Ribonuclease 3 from Helicobacter pylori (strain J99 / ATCC 700824) (Campylobacter pylori J99).